The chain runs to 191 residues: Large ribosomal subunit protein uL3 (191 aa).

The interval 115–137 (GGPASHGSRFHRRHGSIGNREWP) is disordered.

It belongs to the universal ribosomal protein uL3 family. Part of the 50S ribosomal subunit. Forms a cluster with proteins L14 and L19.

One of the primary rRNA binding proteins, it binds directly near the 3'-end of the 23S rRNA, where it nucleates assembly of the 50S subunit. This chain is Large ribosomal subunit protein uL3 (rplC), found in Campylobacter jejuni subsp. jejuni serotype O:2 (strain ATCC 700819 / NCTC 11168).